Reading from the N-terminus, the 138-residue chain is Translation initiation factor 2 subunit beta (138 aa).

The protein belongs to the eIF-2-beta/eIF-5 family. In terms of assembly, heterotrimer composed of an alpha, a beta and a gamma chain.

EIF-2 functions in the early steps of protein synthesis by forming a ternary complex with GTP and initiator tRNA. This is Translation initiation factor 2 subunit beta from Methanococcus maripaludis (strain DSM 14266 / JCM 13030 / NBRC 101832 / S2 / LL).